The primary structure comprises 122 residues: Holo-[acyl-carrier-protein] synthase (122 aa).

The Mg(2+) site is built by Asp-8 and Glu-56.

This sequence belongs to the P-Pant transferase superfamily. AcpS family. The cofactor is Mg(2+).

The protein localises to the cytoplasm. The enzyme catalyses apo-[ACP] + CoA = holo-[ACP] + adenosine 3',5'-bisphosphate + H(+). Transfers the 4'-phosphopantetheine moiety from coenzyme A to a Ser of acyl-carrier-protein. The sequence is that of Holo-[acyl-carrier-protein] synthase from Salinispora arenicola (strain CNS-205).